A 368-amino-acid chain; its full sequence is Germination protease (368 aa).

Positions 1–16 are excised as a propeptide; it reads MEKKKLDLSQYAVRTD.

This sequence belongs to the peptidase A25 family. In terms of assembly, homotetramer. Post-translationally, autoproteolytically processed. The inactive tetrameric zymogen termed p46 autoprocesses to a smaller form termed p41, which is active only during spore germination.

The enzyme catalyses Endopeptidase action with P4 Glu or Asp, P1 preferably Glu &gt; Asp, P1' hydrophobic and P2' Ala.. Functionally, initiates the rapid degradation of small, acid-soluble proteins during spore germination. This is Germination protease from Bacillus licheniformis (strain ATCC 14580 / DSM 13 / JCM 2505 / CCUG 7422 / NBRC 12200 / NCIMB 9375 / NCTC 10341 / NRRL NRS-1264 / Gibson 46).